We begin with the raw amino-acid sequence, 618 residues long: COMPASS component cclA (618 aa).

The segment at 1-91 is disordered; that stretch reads MSSIQPVGSS…KKAAVAPNSA (91 aa). 2 stretches are compositionally biased toward low complexity: residues 8 to 19 and 37 to 49; these read GSSGPSSNINSP and NARS…SNAS. Positions 57 to 69 are enriched in basic residues; sequence SKRNKRDSRKKRE. Residues 157-368 enclose the B30.2/SPRY domain; the sequence is IADPGFPHIK…QSNVFSTKHL (212 aa). Positions 588–618 are disordered; that stretch reads TLSVGHEGSPNPATPSAPLENTVPTEDVEMS.

This sequence belongs to the cclA family. Component of the COMPASS complex.

It localises to the nucleus. The protein localises to the chromosome. It is found in the telomere. Functionally, component of the COMPASS (Set1C) complex that specifically mono-, di- and trimethylates histone H3 to form H3K4me1/2/3, which subsequently plays a role in telomere length maintenance and transcription elongation regulation. Controls the production of several secondary metabolites, including gliotoxin, but does not contribute to pathogenicity. This is COMPASS component cclA from Aspergillus fumigatus (strain ATCC MYA-4609 / CBS 101355 / FGSC A1100 / Af293) (Neosartorya fumigata).